The chain runs to 462 residues: Adenylosuccinate lyase (462 aa).

Residues 21-22, 87-89, and 114-115 each bind N(6)-(1,2-dicarboxyethyl)-AMP; these read RY, KHD, and TS. H162 (proton donor/acceptor) is an active-site residue. N(6)-(1,2-dicarboxyethyl)-AMP is bound at residue Q236. The active-site Proton donor/acceptor is the S287. Residues S288, 293-295, and 332-336 each bind N(6)-(1,2-dicarboxyethyl)-AMP; these read KRN and SAERC.

Belongs to the lyase 1 family. Adenylosuccinate lyase subfamily. Homotetramer. Residues from neighboring subunits contribute catalytic and substrate-binding residues to each active site.

The catalysed reaction is N(6)-(1,2-dicarboxyethyl)-AMP = fumarate + AMP. The enzyme catalyses (2S)-2-[5-amino-1-(5-phospho-beta-D-ribosyl)imidazole-4-carboxamido]succinate = 5-amino-1-(5-phospho-beta-D-ribosyl)imidazole-4-carboxamide + fumarate. It functions in the pathway purine metabolism; AMP biosynthesis via de novo pathway; AMP from IMP: step 2/2. It participates in purine metabolism; IMP biosynthesis via de novo pathway; 5-amino-1-(5-phospho-D-ribosyl)imidazole-4-carboxamide from 5-amino-1-(5-phospho-D-ribosyl)imidazole-4-carboxylate: step 2/2. Catalyzes two reactions in de novo purine nucleotide biosynthesis. Catalyzes the breakdown of 5-aminoimidazole- (N-succinylocarboxamide) ribotide (SAICAR or 2-[5-amino-1-(5-phospho-beta-D-ribosyl)imidazole-4-carboxamido]succinate) to 5-aminoimidazole-4-carboxamide ribotide (AICAR or 5-amino-1-(5-phospho-beta-D-ribosyl)imidazole-4-carboxamide) and fumarate, and of adenylosuccinate (ADS or N(6)-(1,2-dicarboxyethyl)-AMP) to adenosine monophosphate (AMP) and fumarate. This Methanocaldococcus jannaschii (strain ATCC 43067 / DSM 2661 / JAL-1 / JCM 10045 / NBRC 100440) (Methanococcus jannaschii) protein is Adenylosuccinate lyase (purB).